Consider the following 437-residue polypeptide: Probable inactive DNA (cytosine-5)-methyltransferase DRM1B (437 aa).

UBA domains follow at residues Ser-20 to Leu-60 and Glu-120 to Pro-164. Residues Val-243–Cys-437 form the SAM-dependent MTase DRM-type domain.

Belongs to the class I-like SAM-binding methyltransferase superfamily. DRM-methyltransferase family.

Its subcellular location is the nucleus. Functionally, involved in de novo DNA methylation. Involved in RNA-directed DNA methylation (RdDM). The chain is Probable inactive DNA (cytosine-5)-methyltransferase DRM1B from Oryza sativa subsp. japonica (Rice).